A 277-amino-acid polypeptide reads, in one-letter code: Protein CMSS1 (277 aa).

Acidic residues predominate over residues 1-14; the sequence is MADDLGNEWWEEPA. The tract at residues 1-91 is disordered; sequence MADDLGNEWW…QHAPTAGTPE (91 aa). Residues 24-34 show a composition bias toward basic and acidic residues; it reads EEVKESEESKG. Basic residues predominate over residues 35–52; the sequence is NKKKKIPSGKTQVKRKKE. Basic and acidic residues predominate over residues 53 to 66; that stretch reads VKVSQEAEKEDSAP.

This sequence belongs to the CMS1 family.

This is Protein CMSS1 (cmss1) from Xenopus laevis (African clawed frog).